Reading from the N-terminus, the 43-residue chain is Bacteriocin mundticin (43 aa).

Cys-9 and Cys-14 are disulfide-bonded.

In terms of biological role, this bacteriocin inhibits the growth of several Gram-positive bacteria, especially pathogenic L.monocytogenes and C.botulinum but has no effect on the growth of a number of yeasts and Gram-negative bacteria. In Enterococcus mundtii, this protein is Bacteriocin mundticin.